We begin with the raw amino-acid sequence, 120 residues long: Non-specific lipid-transfer protein (120 aa).

An N-terminal signal peptide occupies residues 1–26 (MGVLRSSFVAMMVMYMVLATTPNAEA). Cystine bridges form between cysteine 30–cysteine 79, cysteine 40–cysteine 56, cysteine 57–cysteine 102, and cysteine 77–cysteine 116.

It belongs to the plant LTP family. In terms of tissue distribution, expressed in protoderm cells of somatic and zygotic embryos, and transiently expressed in epidermal cell layers of leaves, flowers and seeds.

Its function is as follows. Plant non-specific lipid-transfer proteins transfer phospholipids as well as galactolipids across membranes. May play a role in wax or cutin deposition in the cell walls of expanding epidermal cells and certain secretory tissues. The protein is Non-specific lipid-transfer protein (EP2) of Daucus carota (Wild carrot).